We begin with the raw amino-acid sequence, 987 residues long: Collagen alpha-1(I) chain (987 aa).

The span at 1–21 (SVPGPMGPSGPRGLPGPPGPG) shows a compositional bias: pro residues. Positions 1–987 (SVPGPMGPSG…PGPPGPPGPP (987 aa)) are disordered. Residues proline 15, proline 18, proline 20, proline 29, proline 32, proline 35, proline 50, proline 65, proline 71, proline 80, and proline 86 each carry the 4-hydroxyproline modification. Residues 23 to 41 (QGFQGPPGEPGEPGSSGPM) are compositionally biased toward low complexity. The span at 53-67 (NGDDGEAGKPGRPGE) shows a compositional bias: basic and acidic residues. 5-hydroxylysine; alternate is present on lysine 89. Residue lysine 89 is glycosylated (O-linked (Gal...) hydroxylysine; alternate). Position 95 is a phosphoserine (serine 95). Residues 103–119 (DAGPAGPKGEPGSPGEN) show a composition bias toward low complexity. Residues proline 113, proline 116, proline 122, proline 131, proline 137, proline 158, proline 167, proline 170, proline 197, proline 200, proline 212, proline 218, proline 227, proline 233, proline 236, and proline 251 each carry the 4-hydroxyproline modification. The span at 137 to 155 (PGASGPAGARGNDGAAGAA) shows a compositional bias: low complexity. Positions 157 to 169 (PPGPTGPAGPPGF) are enriched in pro residues. Low complexity predominate over residues 203–253 (AGAAGPAGNPGADGQPGAKGANGAPGIAGAPGFPGARGPSGPQGPSGAPGP). A 5-hydroxylysine modification is found at lysine 254. 4-hydroxyproline occurs at positions 260, 263, 275, 284, 299, 305, 314, and 320. Over residues 309 to 318 (GERGGPGSRG) the composition is skewed to gly residues. Lysine 329 carries the post-translational modification 5-hydroxylysine. Residues proline 338, proline 347, proline 353, proline 359, proline 368, proline 371, proline 380, proline 389, proline 395, proline 407, proline 416, proline 425, proline 428, proline 446, proline 468, proline 474, proline 480, proline 486, proline 492, proline 504, proline 513, proline 526, proline 532, and proline 541 each carry the 4-hydroxyproline modification. The span at 362–388 (KGLTGSPGSPGPDGKTGPPGPAGQDGR) shows a compositional bias: low complexity. The segment covering 397–416 (ARGQAGVMGFPGPKGAAGEP) has biased composition (low complexity). Residues 458 to 483 (QGPAPGFQGLPGPAGPPGEAGKPGEQ) show a composition bias toward low complexity. Lysine 553 carries the 5-hydroxylysine modification. Proline 559, proline 574, and proline 580 each carry 4-hydroxyproline. Low complexity predominate over residues 586 to 600 (SGPSGPAGPTGARGA). Position 589 is a phosphoserine (serine 589). 8 positions are modified to 4-hydroxyproline: proline 601, proline 607, proline 610, proline 619, proline 625, proline 643, proline 652, and proline 661. The span at 613 to 640 (AGFAGPPGADGQPGAKGEPGDAGAKGDA) shows a compositional bias: low complexity. A compositionally biased stretch (pro residues) spans 642–654 (PPGPAGPTGPPGP). Residue lysine 664 is modified to 5-hydroxylysine. Residues 669 to 685 (SAGPPGATGFPGAAGRV) are compositionally biased toward low complexity. 4-hydroxyproline is present on residues proline 673 and proline 679. The residue at position 687 (proline 687) is a 3-hydroxyproline. A 4-hydroxyproline mark is found at proline 688, proline 697, proline 700, proline 721, proline 730, proline 738, proline 747, proline 765, proline 774, proline 777, proline 783, proline 798, proline 804, proline 810, proline 819, and proline 825. A compositionally biased stretch (low complexity) spans 714–723 (ETGPAGRPGE). The segment covering 735 to 747 (KGSPGADGPAGAP) has biased composition (low complexity). A compositionally biased stretch (pro residues) spans 797-807 (PPGPMGPPGLA). The span at 809–824 (PPGESGREGSPGAEGS) shows a compositional bias: low complexity. Position 834 is a 5-hydroxylysine (lysine 834). Pro residues predominate over residues 843–858 (AGPPGAPGAPGAPGPV). 3 positions are modified to 4-hydroxyproline: proline 846, proline 849, and proline 852. Residues 879 to 893 (AGPAGARGPAGPQGP) are compositionally biased toward low complexity. Residues 894 to 905 (RGDKGETGEQGD) show a composition bias toward basic and acidic residues. Position 897 is a 5-hydroxylysine (lysine 897). 4-hydroxyproline is present on residues proline 918, proline 921, proline 939, and proline 954. The segment covering 921–954 (PGEQGPSGASGPAGPRGPPGSAGSPGKDGLNGLP) has biased composition (low complexity). Proline 959 carries the 3-hydroxyproline modification. A 4-hydroxyproline modification is found at proline 960. Positions 972 to 987 (VGPPGPPGPPGPPGPP) are enriched in pro residues. Proline 974 carries the 3-hydroxyproline modification. 4-hydroxyproline is present on proline 975. Proline 977 carries the post-translational modification 3-hydroxyproline. The residue at position 978 (proline 978) is a 4-hydroxyproline. Proline 980 is subject to 3-hydroxyproline. 4-hydroxyproline occurs at positions 981, 984, and 987.

This sequence belongs to the fibrillar collagen family. In terms of assembly, trimers of one alpha 2(I) and two alpha 1(I) chains. Post-translationally, contains mostly 4-hydroxyproline. Proline residues at the third position of the tripeptide repeating unit (G-X-Y) are hydroxylated in some or all of the chains. Contains 3-hydroxyproline at a few sites. This modification occurs on the first proline residue in the sequence motif Gly-Pro-Hyp, where Hyp is 4-hydroxyproline. In terms of processing, lysine residues at the third position of the tripeptide repeating unit (G-X-Y) are 5-hydroxylated in some or all of the chains. Post-translationally, O-glycosylated on hydroxylated lysine residues. The O-linked glycan consists of a Glc-Gal disaccharide. As to expression, expressed in bones.

The protein localises to the secreted. Its subcellular location is the extracellular space. It is found in the extracellular matrix. Type I collagen is a member of group I collagen (fibrillar forming collagen). The protein is Collagen alpha-1(I) chain of Glossotherium robustum (Ground sloth).